The primary structure comprises 122 residues: uncharacterized protein (122 aa).

Residues 1–17 (MKYSSIFSMLSFFILFA) form the signal peptide.

This is an uncharacterized protein from Escherichia coli (strain K12).